A 370-amino-acid chain; its full sequence is Putative phosphoserine aminotransferase (370 aa).

A disordered region spans residues 1 to 22 (MAELTIPADLKPRDGRFGSGPS). Arg44 contributes to the L-glutamate binding site. Residues Phe102, Thr148, Asp170, and Gln193 each coordinate pyridoxal 5'-phosphate. Lys194 is modified (N6-(pyridoxal phosphate)lysine). 245 to 246 (NT) lines the pyridoxal 5'-phosphate pocket.

The protein belongs to the class-V pyridoxal-phosphate-dependent aminotransferase family. SerC subfamily. Homodimer. Pyridoxal 5'-phosphate serves as cofactor.

It is found in the cytoplasm. It carries out the reaction O-phospho-L-serine + 2-oxoglutarate = 3-phosphooxypyruvate + L-glutamate. The catalysed reaction is 4-(phosphooxy)-L-threonine + 2-oxoglutarate = (R)-3-hydroxy-2-oxo-4-phosphooxybutanoate + L-glutamate. It participates in amino-acid biosynthesis; L-serine biosynthesis; L-serine from 3-phospho-D-glycerate: step 2/3. The protein operates within cofactor biosynthesis; pyridoxine 5'-phosphate biosynthesis; pyridoxine 5'-phosphate from D-erythrose 4-phosphate: step 3/5. In terms of biological role, catalyzes the reversible conversion of 3-phosphohydroxypyruvate to phosphoserine and of 3-hydroxy-2-oxo-4-phosphonooxybutanoate to phosphohydroxythreonine. This is Putative phosphoserine aminotransferase from Mycobacterium sp. (strain JLS).